The chain runs to 810 residues: Leucine--tRNA ligase (810 aa).

Positions 41–52 (PYPSGQGLHVGH) match the 'HIGH' region motif. Residues 582-586 (KMSKS) carry the 'KMSKS' region motif. Lys-585 is an ATP binding site.

The protein belongs to the class-I aminoacyl-tRNA synthetase family.

The protein localises to the cytoplasm. It catalyses the reaction tRNA(Leu) + L-leucine + ATP = L-leucyl-tRNA(Leu) + AMP + diphosphate. The polypeptide is Leucine--tRNA ligase (Oenococcus oeni (strain ATCC BAA-331 / PSU-1)).